Consider the following 377-residue polypeptide: Putative efflux system component YknX (377 aa).

A helical membrane pass occupies residues 3 to 23; sequence KVWIGIGIAVIVALFVGINIY. The stretch at 95-187 forms a coiled coil; it reads TNEQLSLEKE…RVSDLEVKSE (93 aa).

This sequence belongs to the membrane fusion protein (MFP) (TC 8.A.1) family. Part of a complex composed of YknX, YknY and YknZ. The complex interacts with YknW.

The protein localises to the cell membrane. In terms of biological role, part of an unusual four-component transporter, which is required for protection against the killing factor SdpC (sporulation-delaying protein). This Bacillus subtilis (strain 168) protein is Putative efflux system component YknX (yknX).